Reading from the N-terminus, the 937-residue chain is MVCPNGYDPGGRHLLLFIIILAAWEAGRGQLHYSVPEEAKHGNFVGRIAQDLGLELAELVPRLFRVVCKFRGDLLEVNLQNGILFVNSRIDREELCGRSAECSIHLEVIVERPLQVFHVDVEVKDINDNPPVFPATQRNLFIAESRPLDSRFPLEGASDADIGENALLTYRLSPNEYFFLDVPTSNQQVKPLGLVLRKLLDREETPELHLLLTATDGGKPELTGTVQLLITVLDNNDNAPVFDRTLYTVKLPENVSIGTLVIHPNASDLDEGLNGDIIYSFSSDVSPDIKSKFHMDPLSGAITVIGHMDFEESRAHKIPVEAVDKGFPPLAGHCTVLVEVVDVNDNAPQLTLTSLSLPIPEDAQPGTVITLISVFDRDFGVNGQVTCSLTPHVPFKLVSTFKNYYSLVLDRALDRESVSAYELVVTARDGGSPSLWATASVSVEVADVNDNAPAFAQPEYTVFVKENNPPGCHIFTVSAGDADAQKNALVSYSLVERRVGERALSSYISVHAESGKVYVLQPLDHEELELLQFQVSARDAGVPPLGSNVTLQVFVLDENDNAPALLAPRVGGTGGAVRELVPRSVGAGHVVAKVRAVDADSGYNAWLSYELQPVAAGASIPFRVGLYTGEISTTRALDETDAPRHRLLVLVKDHGEPSLTATATVLVSLVESGQAPKASSRASLGIAGPETELVDVNVYLIIAICAVSSLLVLTLLLYTALRCSAPSSEGACSLIKPTLVCSSAVGSWSFSQQRRQRVCSGEGPPKTDLMAFSPSLPQGPSSTDNPRQPNPDWRYSASLRAGMHSSVHLEEAGILRAGPGGPDQQWPTVSSATPEPEAGEVSPPVGAGVNSNSWTFKYGPGNPKQSGPGELPDKFIIPGSPAIISIRQEPANSQIDKSDFITFGKKEETKKKKKKKKGNKTQEKKEKGNSTTDNSDQ.

The N-terminal stretch at 1–29 (MVCPNGYDPGGRHLLLFIIILAAWEAGRG) is a signal peptide. Cadherin domains lie at 30–133 (QLHY…PPVF), 134–242 (PATQ…APVF), 243–350 (DRTL…APQL), 351–455 (TLTS…APAF), 456–565 (AQPE…APAL), and 581–678 (VPRS…APKA). Topologically, residues 30–697 (QLHYSVPEEA…GPETELVDVN (668 aa)) are extracellular. An intrachain disulfide couples Cys-96 to Cys-102. Asn-254 and Asn-265 each carry an N-linked (GlcNAc...) asparagine glycan. A glycan (N-linked (GlcNAc...) asparagine) is linked at Asn-548. A helical membrane pass occupies residues 698 to 718 (VYLIIAICAVSSLLVLTLLLY). At 719–937 (TALRCSAPSS…GNSTTDNSDQ (219 aa)) the chain is on the cytoplasmic side. 2 disordered regions span residues 756–795 (QRVCSGEGPPKTDLMAFSPSLPQGPSSTDNPRQPNPDWRY) and 817–843 (AGPGGPDQQWPTVSSATPEPEAGEVSP). PXXP repeat units lie at residues 774–777 (PSLP), 786–789 (PRQP), 819–822 (PGGP), 860–863 (PGNP), and 878–881 (PGSP). The segment at 774–881 (PSLPQGPSST…PDKFIIPGSP (108 aa)) is 5 X 4 AA repeats of P-X-X-P. Polar residues predominate over residues 775–787 (SLPQGPSSTDNPR). The tract at residues 888 to 937 (QEPANSQIDKSDFITFGKKEETKKKKKKKKGNKTQEKKEKGNSTTDNSDQ) is disordered. The span at 896 to 910 (DKSDFITFGKKEETK) shows a compositional bias: basic and acidic residues.

Forms homodimers in trans (molecules expressed by two different cells). Forms promiscuous heterodimers in cis (at the plasma membrane of the same cell) with other protocadherins.

It is found in the cell membrane. Calcium-dependent cell-adhesion protein involved in cells self-recognition and non-self discrimination. Thereby, it is involved in the establishment and maintenance of specific neuronal connections in the brain. This Pan troglodytes (Chimpanzee) protein is Protocadherin alpha-7.